Consider the following 213-residue polypeptide: Ribulose-phosphate 3-epimerase (213 aa).

S9 contacts substrate. Residues H34, D36, and H66 each coordinate a divalent metal cation. Catalysis depends on D36, which acts as the Proton acceptor. Substrate-binding positions include H66, 139–142, 166–168, and 186–187; these read GFGG, DGG, and GS. Residue D166 coordinates a divalent metal cation. The active-site Proton donor is the D166.

It belongs to the ribulose-phosphate 3-epimerase family. Co(2+) serves as cofactor. The cofactor is Fe(2+). Mn(2+) is required as a cofactor. It depends on Zn(2+) as a cofactor.

It carries out the reaction D-ribulose 5-phosphate = D-xylulose 5-phosphate. It functions in the pathway carbohydrate degradation; pentose phosphate pathway; D-xylulose 5-phosphate from D-ribulose 5-phosphate (non-oxidative stage): step 1/1. Its function is as follows. Catalyzes the reversible epimerization of D-ribulose 5-phosphate to D-xylulose 5-phosphate. This chain is Ribulose-phosphate 3-epimerase (RPE1), found in Encephalitozoon cuniculi (strain GB-M1) (Microsporidian parasite).